The primary structure comprises 185 residues: Elongation factor P (185 aa).

Belongs to the elongation factor P family.

It is found in the cytoplasm. Its pathway is protein biosynthesis; polypeptide chain elongation. In terms of biological role, involved in peptide bond synthesis. Stimulates efficient translation and peptide-bond synthesis on native or reconstituted 70S ribosomes in vitro. Probably functions indirectly by altering the affinity of the ribosome for aminoacyl-tRNA, thus increasing their reactivity as acceptors for peptidyl transferase. The polypeptide is Elongation factor P (efp) (Thermotoga maritima (strain ATCC 43589 / DSM 3109 / JCM 10099 / NBRC 100826 / MSB8)).